Consider the following 1120-residue polypeptide: TBC1 domain family member 8B (1120 aa).

GRAM domains lie at 145–212 and 285–353; these read LKFE…EKTS and EQFN…DKTN. The Rab-GAP TBC domain maps to 487–674; the sequence is GIPETLRGEL…NVVDCFFYDG (188 aa). Residues 858 to 893 form the EF-hand domain; sequence NKDSLALWTFRLLDENSDCLINFKEFSSAIDIMYNG. Residues 1035 to 1066 are disordered; that stretch reads SPTSSAKGFSGTVCGSGGPSEEKTGSHLEKDP. The segment covering 1054–1066 has biased composition (basic and acidic residues); sequence SEEKTGSHLEKDP.

In terms of assembly, interacts (via domain Rab-GAP TBC) with RAB11B (in GTP-bound form). As to expression, kidney (at protein level).

Its subcellular location is the cytoplasm. It is found in the cytosol. Involved in vesicular recycling, probably as a RAB11B GTPase-activating protein. This chain is TBC1 domain family member 8B (TBC1D8B), found in Homo sapiens (Human).